Reading from the N-terminus, the 316-residue chain is Transaldolase (316 aa).

Catalysis depends on Lys-131, which acts as the Schiff-base intermediate with substrate.

It belongs to the transaldolase family. Type 1 subfamily. Homodimer.

It is found in the cytoplasm. The enzyme catalyses D-sedoheptulose 7-phosphate + D-glyceraldehyde 3-phosphate = D-erythrose 4-phosphate + beta-D-fructose 6-phosphate. It participates in carbohydrate degradation; pentose phosphate pathway; D-glyceraldehyde 3-phosphate and beta-D-fructose 6-phosphate from D-ribose 5-phosphate and D-xylulose 5-phosphate (non-oxidative stage): step 2/3. Functionally, transaldolase is important for the balance of metabolites in the pentose-phosphate pathway. This chain is Transaldolase, found in Buchnera aphidicola subsp. Baizongia pistaciae (strain Bp).